The following is a 345-amino-acid chain: KRR1 small subunit processome component homolog (345 aa).

The 69-residue stretch at 125–193 folds into the KH domain; sequence DIIKIGNLVH…VRDIVLETMN (69 aa). Positions 232-245 are enriched in basic residues; it reads NISKRKQPKVKKQK. Disordered stretches follow at residues 232 to 260 and 273 to 329; these read NISK…ESKV and QEQK…VDVK. Positions 270-298 form a coiled coil; that stretch reads FLNQEQKQAKRNQERTEKQKEAAKRQDER. 2 stretches are compositionally biased toward basic and acidic residues: residues 276–302 and 315–329; these read KQAK…RNKD and LKKE…VDVK.

This sequence belongs to the KRR1 family. Monomer. Component of the ribosomal small subunit (SSU) processome.

The protein localises to the nucleus. Its subcellular location is the nucleolus. Functionally, required for 40S ribosome biogenesis. Involved in nucleolar processing of pre-18S ribosomal RNA and ribosome assembly. Binds to RNA. Required for female germline development, cell viability during eye development and for survival of dividing cells and epithelial cells during early wing disk development. In Drosophila erecta (Fruit fly), this protein is KRR1 small subunit processome component homolog.